A 182-amino-acid chain; its full sequence is Large ribosomal subunit protein uL6 (182 aa).

Belongs to the universal ribosomal protein uL6 family. As to quaternary structure, part of the 50S ribosomal subunit.

This protein binds to the 23S rRNA, and is important in its secondary structure. It is located near the subunit interface in the base of the L7/L12 stalk, and near the tRNA binding site of the peptidyltransferase center. The protein is Large ribosomal subunit protein uL6 of Carboxydothermus hydrogenoformans (strain ATCC BAA-161 / DSM 6008 / Z-2901).